The primary structure comprises 78 residues: Exodeoxyribonuclease 7 small subunit (78 aa).

Belongs to the XseB family. As to quaternary structure, heterooligomer composed of large and small subunits.

The protein localises to the cytoplasm. The catalysed reaction is Exonucleolytic cleavage in either 5'- to 3'- or 3'- to 5'-direction to yield nucleoside 5'-phosphates.. Functionally, bidirectionally degrades single-stranded DNA into large acid-insoluble oligonucleotides, which are then degraded further into small acid-soluble oligonucleotides. The sequence is that of Exodeoxyribonuclease 7 small subunit from Mycobacterium leprae (strain TN).